Consider the following 270-residue polypeptide: Phosphonoacetaldehyde hydrolase (270 aa).

Residue Asp-11 is the Nucleophile of the active site. Asp-11 and Ala-13 together coordinate Mg(2+). Lys-53 acts as the Schiff-base intermediate with substrate in catalysis. A Mg(2+)-binding site is contributed by Asp-187.

The protein belongs to the HAD-like hydrolase superfamily. PhnX family. As to quaternary structure, homodimer. It depends on Mg(2+) as a cofactor.

The catalysed reaction is phosphonoacetaldehyde + H2O = acetaldehyde + phosphate + H(+). Functionally, involved in phosphonate degradation. The protein is Phosphonoacetaldehyde hydrolase of Salmonella enteritidis PT4 (strain P125109).